A 997-amino-acid chain; its full sequence is Disease resistance protein RML1A (997 aa).

In terms of domain architecture, TIR spans 12-176; that stretch reads WRYRVFTSFH…KIARDVSEKL (165 aa). Glu-87 is an active-site residue. One can recognise an NB-ARC domain in the interval 191–447; that stretch reads EAHLRKIQSL…HIAIFFNYED (257 aa). LRR repeat units lie at residues 194-218, 534-557, 600-623, 624-647, 649-670, 671-693, 694-714, 715-737, 758-781, and 783-808; these read LRKI…GPAG, TSGI…RFLS, AENL…TQLL, TKLK…SNAT, LEML…IKNL, HKLD…NINL, ASLE…PAFS, TKIK…ITHC, PSSL…CIKD, and QRLD…SLRL.

It carries out the reaction NAD(+) + H2O = ADP-D-ribose + nicotinamide + H(+). Its function is as follows. TIR-NB-LRR receptor-like protein that confers resistance to the pathogen Leptosphaeria maculans (blackleg disease). The protein is Disease resistance protein RML1A of Arabidopsis thaliana (Mouse-ear cress).